The chain runs to 245 residues: Small ribosomal subunit protein uS2 (245 aa).

Belongs to the universal ribosomal protein uS2 family.

The protein is Small ribosomal subunit protein uS2 of Dehalococcoides mccartyi (strain ATCC BAA-2266 / KCTC 15142 / 195) (Dehalococcoides ethenogenes (strain 195)).